A 186-amino-acid polypeptide reads, in one-letter code: Peptidyl-tRNA hydrolase (186 aa).

Tyr-16 provides a ligand contact to tRNA. The active-site Proton acceptor is His-21. TRNA-binding residues include Tyr-60 and Asn-62.

This sequence belongs to the PTH family. Monomer.

The protein resides in the cytoplasm. It catalyses the reaction an N-acyl-L-alpha-aminoacyl-tRNA + H2O = an N-acyl-L-amino acid + a tRNA + H(+). Hydrolyzes ribosome-free peptidyl-tRNAs (with 1 or more amino acids incorporated), which drop off the ribosome during protein synthesis, or as a result of ribosome stalling. In terms of biological role, catalyzes the release of premature peptidyl moieties from peptidyl-tRNA molecules trapped in stalled 50S ribosomal subunits, and thus maintains levels of free tRNAs and 50S ribosomes. In Tropheryma whipplei (strain TW08/27) (Whipple's bacillus), this protein is Peptidyl-tRNA hydrolase.